A 337-amino-acid polypeptide reads, in one-letter code: Heme A synthase (337 aa).

7 consecutive transmembrane segments (helical) span residues 3–23 (LARWLWVVAGLVVTIVAIGGI), 94–114 (VIGLAFLLPMMWFWIRGMIPA), 120–140 (LLALFALICGQGALGWYMVAS), 154–174 (LSAHLLTALFLLAGLVWTALD), 191–211 (GVAWMASIILFIQILLGAWVA), 248–268 (FLLHFLHRWWAWVAVIALVVL), and 289–309 (TMVVLGIATVLSEVSLWIAVA). Heme is bound at residue His-254. Heme is bound at residue His-310. Residues 311–331 (QLTGALLVISTAWAAHAIGTA) traverse the membrane as a helical segment.

Belongs to the COX15/CtaA family. Type 2 subfamily. Interacts with CtaB. Heme b serves as cofactor.

The protein resides in the cell membrane. It carries out the reaction Fe(II)-heme o + 2 A + H2O = Fe(II)-heme a + 2 AH2. It functions in the pathway porphyrin-containing compound metabolism; heme A biosynthesis; heme A from heme O: step 1/1. Functionally, catalyzes the conversion of heme O to heme A by two successive hydroxylations of the methyl group at C8. The first hydroxylation forms heme I, the second hydroxylation results in an unstable dihydroxymethyl group, which spontaneously dehydrates, resulting in the formyl group of heme A. The polypeptide is Heme A synthase (Erythrobacter litoralis (strain HTCC2594)).